Here is a 227-residue protein sequence, read N- to C-terminus: E3 ubiquitin-protein ligase RNF186 (227 aa).

An RING-type zinc finger spans residues 40–86 (CLVCREPYSCPRLPKLLACQHAFCAICLKLLLCVQDNTWSITCPLCR). A run of 2 helical transmembrane segments spans residues 158 to 178 (HLLL…PGVL) and 180 to 200 (WVLT…CCLP).

Interacts with BNIP1. In terms of processing, polyubiquitinated. 'Lys-29'-linked autoubiquitination leads to proteasomal degradation.

The protein resides in the endoplasmic reticulum membrane. It carries out the reaction S-ubiquitinyl-[E2 ubiquitin-conjugating enzyme]-L-cysteine + [acceptor protein]-L-lysine = [E2 ubiquitin-conjugating enzyme]-L-cysteine + N(6)-ubiquitinyl-[acceptor protein]-L-lysine.. It participates in protein modification; protein ubiquitination. Its function is as follows. E3 ubiquitin protein ligase that is part of an apoptotic signaling pathway activated by endoplasmic reticulum stress. Stimulates the expression of proteins specific of the unfolded protein response (UPR), ubiquitinates BNIP1 and regulates its localization to the mitochondrion and induces calcium release from the endoplasmic reticulum that ultimately leads to cell apoptosis. Plays a role in the maintenance of intestinal homeostasis and clearance of enteric pathogens. Upon NOD2 stimulation, ubiquitinates the ER stress sensor activating transcription factor 6/ATF6 and promotes the unfolded protein response UPR. Participates in basal level of autophagy maintenance by regulating the ubiquitination of EPHB2 and EPHB3. Upon stimulation by ligand EFNB1, ubiquitinates EPHB2 and further recruits MAP1LC3B for autophagy induction. Controls nutrient sensing by ubiquitinating Sestrin-2/SESN2, which is an intracellular sensor of cytosolic leucine and inhibitor of mTORC1 activity. This Homo sapiens (Human) protein is E3 ubiquitin-protein ligase RNF186.